Here is a 2731-residue protein sequence, read N- to C-terminus: Putative mediator of RNA polymerase II transcription subunit 12 (2731 aa).

Coiled-coil stretches lie at residues 5-37 (QQILQQQQQMIQQQQQQLHQQQMQQQQMQQQQQ), 75-108 (HIQQQQQQQQQQQQQQQQQQQQQQQQQQQQQQVH), 141-189 (QQIH…QQQQ), and 275-304 (IQQLQQQQQLQQQQQQQQQQQQQQQQQQQQ). Disordered stretches follow at residues 29 to 57 (QQQMQQQQQHHMQQQQPMQHMQQPHHMIH) and 101 to 145 (QQQQ…QIHQ). Low complexity predominate over residues 310–320 (QPQQQQQQQQP). Disordered stretches follow at residues 310–376 (QPQQ…DDKS), 432–451 (TQKSGQPPVMNKSGNKRPVP), 685–708 (LGHGHGHGHGHHSHSHSHNQQQPQ), and 1251–1341 (RNNN…QQKS). The span at 327-337 (QNPSYHSQSQI) shows a compositional bias: polar residues. Over residues 347 to 361 (KKYEIQKPADKKELG) the composition is skewed to basic and acidic residues. Positions 688-701 (GHGHGHGHHSHSHS) are enriched in basic residues. Residues 1251–1268 (RNNNNNNKNKNNNKQSNN) show a composition bias toward low complexity. 2 stretches are compositionally biased toward acidic residues: residues 1275 to 1298 (NGEEQESDDDDDDDEDDDDDDNDE) and 1305 to 1326 (NDNEEDDEEDDEDEDEDEDDQM). Coiled coils occupy residues 1316–1344 (EDEDEDEDDQMDETKDSIKQQQQQKSNEN) and 1375–1433 (KLKK…DEEL). Disordered regions lie at residues 1778–1825 (HDDN…NNNG), 1892–1958 (TQSS…NNTT), 2212–2258 (SSSS…NNVK), 2307–2351 (TSSV…QQQQ), 2472–2532 (EIEK…KPQT), and 2705–2731 (HQQIPQQQQHQQHQQQKCSTTKYNNYK). 9 stretches are compositionally biased toward low complexity: residues 1783-1824 (ENNN…NNNN), 1892-1909 (TQSSTTSPLTKSPSQSPT), 1916-1958 (NSTN…NNTT), 2212-2250 (SSSSSTTTTSTTSTPVTSSPSTTTTATTNQQQQQQQQQQ), 2307-2322 (TSSVSSTNTSIQSTTS), 2337-2351 (QQQTSQQQQQQQQQQ), 2472-2501 (EIEKQQQQQQIKSQPSTPLTSLPPQQHQQL), 2508-2532 (LQQQLNQQQQRQQPPQQLQQQKPQT), and 2705-2720 (HQQIPQQQQHQQHQQQ). Residues 2239–2270 (TNQQQQQQQQQQADQKNNVKKKLHELYQKIKS) adopt a coiled-coil conformation. Residues 2336–2363 (LQQQTSQQQQQQQQQQQQQSQQHQQQQQ) adopt a coiled-coil conformation. Residues 2523-2662 (QQLQQQKPQT…QQQQQQLQQL (140 aa)) adopt a coiled-coil conformation. Positions 2721–2731 (KCSTTKYNNYK) are enriched in polar residues.

Belongs to the Mediator complex subunit 12 family. Component of the Mediator complex.

It is found in the nucleus. Functionally, component of the Mediator complex, a coactivator involved in the regulated transcription of nearly all RNA polymerase II-dependent genes. Mediator functions as a bridge to convey information from gene-specific regulatory proteins to the basal RNA polymerase II transcription machinery. Mediator is recruited to promoters by direct interactions with regulatory proteins and serves as a scaffold for the assembly of a functional preinitiation complex with RNA polymerase II and the general transcription factors. The sequence is that of Putative mediator of RNA polymerase II transcription subunit 12 (med12) from Dictyostelium discoideum (Social amoeba).